A 147-amino-acid chain; its full sequence is Myoglobin (147 aa).

A Globin domain is found at 2–141 (ADFDMVLKCW…IIADMEADYK (140 aa)). His60 is a nitrite binding site. O2 is bound at residue His60. Position 89 (His89) interacts with heme b.

The protein belongs to the globin family. Monomeric.

The protein resides in the cytoplasm. It localises to the sarcoplasm. The enzyme catalyses Fe(III)-heme b-[protein] + nitric oxide + H2O = Fe(II)-heme b-[protein] + nitrite + 2 H(+). It catalyses the reaction H2O2 + AH2 = A + 2 H2O. Monomeric heme protein which primary function is to store oxygen and facilitate its diffusion within muscle tissues. Reversibly binds oxygen through a pentacoordinated heme iron and enables its timely and efficient release as needed during periods of heightened demand. Depending on the oxidative conditions of tissues and cells, and in addition to its ability to bind oxygen, it also has a nitrite reductase activity whereby it regulates the production of bioactive nitric oxide. Under stress conditions, like hypoxia and anoxia, it also protects cells against reactive oxygen species thanks to its pseudoperoxidase activity. The chain is Myoglobin (mb) from Gobionotothen gibberifrons (Humped rockcod).